Reading from the N-terminus, the 609-residue chain is Transcription factor ntnD (609 aa).

Residues 1–7 (MCVGIEC) constitute a DNA-binding region (zn(2)-C6 fungal-type). Positions 46 to 104 (FRDQNESSLNRIHNRRTSNSQPSTRSINNTTTIPASNNEPLALSQPPSASSQNQVEKDQ) are disordered. Over residues 51–84 (ESSLNRIHNRRTSNSQPSTRSINNTTTIPASNNE) the composition is skewed to polar residues. Residues 85 to 97 (PLALSQPPSASSQ) show a composition bias toward low complexity.

It belongs to the TRI10 transcription regulator family.

It localises to the nucleus. Its function is as follows. Transcription factor; part of the gene cluster that mediates the biosynthesis of meroterpenoids. The protein is Transcription factor ntnD of Nectria sp.